The chain runs to 441 residues: Protein cortex (441 aa).

7 WD repeats span residues 110 to 148 (SITS…VDQG), 149 to 187 (QTMF…QFVQ), 193 to 233 (IQIC…KSLV), 235 to 276 (IEGA…RFMK), 277 to 320 (TNEI…KLRQ), 345 to 379 (SLWS…ESHT), and 380 to 420 (GLNR…KILA). Positions 379 to 390 (TGLNRIRTMVFS) match the D-box motif.

The protein belongs to the WD repeat CORT family.

It localises to the cytoplasm. Its function is as follows. Controls wing pigmentation patterning, possibly by regulating scale cell development. Probably acts as an activator of the anaphase promoting complex/cyclosome (APC/C) that promotes the ubiquitin ligase activity and substrate specificity of the APC/C. The protein is Protein cortex of Biston betularia (Pepper-and-salt geometer moth).